Consider the following 116-residue polypeptide: Class I hydrophobin 1 (116 aa).

Residues 1–19 form the signal peptide; the sequence is MLFKQAILVATTLTTLAVA. Cystine bridges form between Cys35–Cys95, Cys42–Cys89, Cys43–Cys76, and Cys96–Cys109. N-linked (GlcNAc...) asparagine glycans are attached at residues Asn44 and Asn100.

The protein belongs to the fungal hydrophobin family. As to quaternary structure, self-assembles to form functional amyloid fibrils called rodlets. Self-assembly into fibrillar rodlets occurs spontaneously at hydrophobic:hydrophilic interfaces and the rodlets further associate laterally to form amphipathic monolayers.

It is found in the secreted. The protein localises to the cell wall. Aerial growth, conidiation, and dispersal of filamentous fungi in the environment rely upon a capability of their secreting small amphipathic proteins called hydrophobins (HPBs) with low sequence identity. Class I can self-assemble into an outermost layer of rodlet bundles on aerial cell surfaces, conferring cellular hydrophobicity that supports fungal growth, development and dispersal; whereas Class II form highly ordered films at water-air interfaces through intermolecular interactions but contribute nothing to the rodlet structure. The chain is Class I hydrophobin 1 from Pleurotus ostreatus (strain PC15) (Oyster mushroom).